Here is a 595-residue protein sequence, read N- to C-terminus: FERM domain-containing protein 3 (595 aa).

The FERM domain occupies 32-312; that stretch reads MKCTIRLLDD…ENQAFYKYAK (281 aa). The helical transmembrane segment at 529–549 threads the bilayer; that stretch reads LLVVGLGLLLFVFPLLLLLLE.

The protein resides in the membrane. Putative tumor suppressor gene that may be implicated in the origin and progression of lung cancer. The sequence is that of FERM domain-containing protein 3 (Frmd3) from Mus musculus (Mouse).